The chain runs to 622 residues: Threonine--tRNA ligase (622 aa).

Residues 1 to 136 are editing domain; sequence MKTLLIHSDY…PLSELSRKIT (136 aa). Residues 199–498 form a catalytic region; that stretch reads PHVKYIKEKE…TLENKPPALP (300 aa). Residues Cys-291, His-343, and His-467 each coordinate Zn(2+).

Belongs to the class-II aminoacyl-tRNA synthetase family. Homodimer. The cofactor is Zn(2+).

It is found in the cytoplasm. The catalysed reaction is tRNA(Thr) + L-threonine + ATP = L-threonyl-tRNA(Thr) + AMP + diphosphate + H(+). Functionally, catalyzes the attachment of threonine to tRNA(Thr) in a two-step reaction: L-threonine is first activated by ATP to form Thr-AMP and then transferred to the acceptor end of tRNA(Thr). Also edits incorrectly charged L-seryl-tRNA(Thr). This Methanococcus maripaludis (strain DSM 14266 / JCM 13030 / NBRC 101832 / S2 / LL) protein is Threonine--tRNA ligase.